The chain runs to 213 residues: Small ribosomal subunit protein uS3 (213 aa).

A KH type-2 domain is found at 38-106 (IRKYVKEKIF…EFALEVSEIR (69 aa)).

This sequence belongs to the universal ribosomal protein uS3 family. As to quaternary structure, part of the 30S ribosomal subunit. Forms a tight complex with proteins S10 and S14.

Its function is as follows. Binds the lower part of the 30S subunit head. Binds mRNA in the 70S ribosome, positioning it for translation. This chain is Small ribosomal subunit protein uS3, found in Maridesulfovibrio salexigens (strain ATCC 14822 / DSM 2638 / NCIMB 8403 / VKM B-1763) (Desulfovibrio salexigens).